Consider the following 706-residue polypeptide: Vitamin B12-dependent ribonucleoside-diphosphate reductase (706 aa).

Residues Ala-21–Arg-109 form the ATP-cone domain. Substrate is bound by residues Ser-191, Gly-206–Cys-207, Gly-235, Asn-389–Glu-393, and Pro-534–Ile-538. Cysteines 207 and 402 form a disulfide. Catalysis depends on Asn-389, which acts as the Proton acceptor. Cys-391 (cysteine radical intermediate) is an active-site residue. The Proton acceptor role is filled by Glu-393.

Belongs to the ribonucleoside diphosphate reductase class-2 family. Adenosylcob(III)alamin serves as cofactor.

The catalysed reaction is a 2'-deoxyribonucleoside 5'-diphosphate + [thioredoxin]-disulfide + H2O = a ribonucleoside 5'-diphosphate + [thioredoxin]-dithiol. In terms of biological role, provides the precursors necessary for DNA synthesis. Catalyzes the biosynthesis of deoxyribonucleotides from the corresponding ribonucleotides. The polypeptide is Vitamin B12-dependent ribonucleoside-diphosphate reductase (nrdZ) (Mycobacterium tuberculosis (strain ATCC 25618 / H37Rv)).